Here is a 323-residue protein sequence, read N- to C-terminus: Transaldolase (323 aa).

The active-site Schiff-base intermediate with substrate is the K133.

It belongs to the transaldolase family. Type 1 subfamily. Monomer.

It catalyses the reaction D-sedoheptulose 7-phosphate + D-glyceraldehyde 3-phosphate = D-erythrose 4-phosphate + beta-D-fructose 6-phosphate. The protein operates within carbohydrate degradation; pentose phosphate pathway; D-glyceraldehyde 3-phosphate and beta-D-fructose 6-phosphate from D-ribose 5-phosphate and D-xylulose 5-phosphate (non-oxidative stage): step 2/3. Transaldolase important for the balance of metabolites in the pentose-phosphate pathway. Involved in xylose fermentation to ethanol. The protein is Transaldolase of Fusarium oxysporum f. sp. lycopersici (strain 4287 / CBS 123668 / FGSC 9935 / NRRL 34936) (Fusarium vascular wilt of tomato).